A 340-amino-acid chain; its full sequence is Protein-arginine kinase (340 aa).

The Phosphagen kinase C-terminal domain maps to 21–242 (VVLSSRIRLA…EQIIMQERIA (222 aa)). ATP-binding positions include 24–28 (SSRIR), histidine 79, arginine 113, 164–168 (RASVM), and 195–200 (RGIYGE).

This sequence belongs to the ATP:guanido phosphotransferase family.

The enzyme catalyses L-arginyl-[protein] + ATP = N(omega)-phospho-L-arginyl-[protein] + ADP + H(+). Catalyzes the specific phosphorylation of arginine residues in proteins. The protein is Protein-arginine kinase of Listeria monocytogenes serotype 4a (strain HCC23).